A 349-amino-acid chain; its full sequence is SUMO-activating enzyme subunit 1 (349 aa).

Residue M1 is modified to N-acetylmethionine. At V2 the chain carries N-acetylvaline; in SUMO-activating enzyme subunit 1, N-terminally processed. Residue S15 is modified to Phosphoserine. An N6-acetyllysine modification is found at K201.

It belongs to the ubiquitin-activating E1 family. As to quaternary structure, heterodimer of SAE1 and UBA2/SAE2. The heterodimer corresponds to the two domains that are encoded on a single polypeptide chain in ubiquitin-activating enzyme E1. Interacts with UBE2I.

The protein resides in the nucleus. Its pathway is protein modification; protein sumoylation. Functionally, the heterodimer acts as an E1 ligase for SUMO1, SUMO2, SUMO3, and probably SUMO4. It mediates ATP-dependent activation of SUMO proteins followed by formation of a thioester bond between a SUMO protein and a conserved active site cysteine residue on UBA2/SAE2. The sequence is that of SUMO-activating enzyme subunit 1 (Sae1) from Rattus norvegicus (Rat).